The following is a 37-amino-acid chain: Delta-amaurobitoxin-Pl1a (37 aa).

4 disulfides stabilise this stretch: C2–C18, C9–C23, C17–C33, and C25–C31. At S37 the chain carries Serine amide.

The protein belongs to the neurotoxin 07 (Beta/delta-agtx) family. 02 (aga-3) subfamily. Expressed by the venom gland.

Its subcellular location is the secreted. Functionally, binds at site 4 of sodium channels (Nav) and inhibits the fast inactivation of cockroach channels. This toxin is active only on insects. Has a potent activity against S.litura larvae. The chain is Delta-amaurobitoxin-Pl1a from Pireneitega luctuosa (Tangled nest spider).